The chain runs to 168 residues: MAENKPFRGPIRANTDRKANRRGAARLAAVQALYQMDIAGAGINDVLAEFESHWLGNEVEGEQYLPAEAAFFRDIVSGVVRDQTKIDPVLDTALERGWPLQRIEAILRAVLRAGAYELERRKDVPAKVVVSEYVDIAHAFVERDETGMVNAVLEQLARQYRGDEMGPK.

Belongs to the NusB family.

In terms of biological role, involved in transcription antitermination. Required for transcription of ribosomal RNA (rRNA) genes. Binds specifically to the boxA antiterminator sequence of the ribosomal RNA (rrn) operons. This chain is Transcription antitermination protein NusB, found in Bradyrhizobium sp. (strain ORS 278).